Reading from the N-terminus, the 153-residue chain is Superoxide dismutase [Cu-Zn] (153 aa).

3 residues coordinate Cu cation: His-45, His-47, and His-62. The cysteines at positions 56 and 145 are disulfide-linked. His-62, His-70, His-79, and Asp-82 together coordinate Zn(2+). His-119 serves as a coordination point for Cu cation.

Belongs to the Cu-Zn superoxide dismutase family. In terms of assembly, homodimer. It depends on Cu cation as a cofactor. The cofactor is Zn(2+).

It localises to the cytoplasm. The catalysed reaction is 2 superoxide + 2 H(+) = H2O2 + O2. Functionally, destroys radicals which are normally produced within the cells and which are toxic to biological systems. The chain is Superoxide dismutase [Cu-Zn] from Drosophila erecta (Fruit fly).